Here is a 217-residue protein sequence, read N- to C-terminus: MSCARALAACCLWRLRTGALQPLSAYGRRISVRFCSSGMTLDNINREAVDRIIRVDHAGEYGANRIYAGQMAVLGRTSIGPVIQKMWDQEKDHLKKFNELMVAFRVRPTVLMPFWNVVGFALGAGTALLGKEGAMACTVAVEESIAHHYNNQIRTLMEKEPEKYEELLQVIKKFRDEELEHHDIGLEHDAELAPAYVVLKSVIQAGCKVAIYLSERL.

The transit peptide at 1-34 directs the protein to the mitochondrion; it reads MSCARALAACCLWRLRTGALQPLSAYGRRISVRF. Tandem repeats lie at residues 48-129 and 130-217. Residues 48 to 217 form a 2 X approximate tandem repeats region; that stretch reads AVDRIIRVDH…KVAIYLSERL (170 aa). Residue Arg51 participates in NADH binding. The Fe cation site is built by Glu60, Glu90, His93, Glu142, Glu178, and His181. Residues Lys208, Tyr212, and Arg216 each contribute to the NADH site.

The protein belongs to the COQ7 family. As to quaternary structure, component of a multi-subunit COQ enzyme complex. Interacts with COQ8B and COQ6. Interacts with COQ9. The cofactor is Fe cation.

It localises to the mitochondrion inner membrane. The enzyme catalyses a 5-methoxy-2-methyl-3-(all-trans-polyprenyl)benzoquinone + NADH + O2 = a 3-demethylubiquinone + NAD(+) + H2O. It participates in cofactor biosynthesis; ubiquinone biosynthesis. Its function is as follows. Catalyzes the hydroxylation of the 5-methoxy-2-methyl-3-(all-trans-polyprenyl)benzoquinone at the C6 position and participates in the biosynthesis of ubiquinone. Catalyzes the reaction through a substrate-mediated reduction pathway, whereby NADH shuttles electrons to 5-methoxy-2-methyl-3-(all-trans-decaprenyl)benzoquinone, which then transfers the electrons to the two Fe(3+) centers. The binding of 5-methoxy-2-methyl-3-(all-trans-polyprenyl)benzoquinone (DMQn) mediates reduction of the diiron center by nicotinamide adenine dinucleotide (NADH) and initiates oxygen activation for subsequent DMQ hydroxylation. The physiological substrates are 5-methoxy-2-methyl-3-(all-trans-nonaprenyl)benzoquinone (DMQ(9)) and 5-methoxy-2-methyl-3-(all-trans-decaprenyl)benzoquinone (DMQ(10)), however in vitro the enzyme does not have any specificity concerning the length of the polyprenyl tail, and accepts tails of various lengths with similar efficiency. Also has a structural role in the COQ enzyme complex, stabilizing other COQ polypeptides. Involved in lifespan determination in a ubiquinone-independent manner. Plays a role in modulating mitochondrial stress responses, acting in the nucleus, perhaps via regulating gene expression, independent of its characterized mitochondrial function in ubiquinone biosynthesis. The polypeptide is NADPH-dependent 3-demethoxyubiquinone 3-hydroxylase, mitochondrial (Bos taurus (Bovine)).